A 397-amino-acid chain; its full sequence is DnaJ homolog subfamily A member 1 (397 aa).

Residues 6–68 enclose the J domain; that stretch reads TYYDVLGVKP…KKRELYDKGG (63 aa). Lys66 is subject to N6-acetyllysine. Ser83 is modified (phosphoserine). A CR-type zinc finger spans residues 121-205; sequence GATRKLALQK…CNGRKIVREK (85 aa). Zn(2+) contacts are provided by Cys134, Cys137, Cys150, Cys153, Cys177, Cys180, Cys193, and Cys196. 4 CXXCXGXG motif repeats span residues 134 to 141, 150 to 157, 177 to 184, and 193 to 200; these read CDKCEGRG, CPNCRGTG, CMECQGHG, and CKSCNGRK. A Phosphoserine modification is found at Ser335. The segment at 352–397 is disordered; sequence VEETDEMDQVELVDFDPNQERRRHYNGEAYEDDEHHPRGGVQCQTS. Over residues 353–365 the composition is skewed to acidic residues; it reads EETDEMDQVELVD. At Tyr381 the chain carries Phosphotyrosine. Cys394 is subject to Cysteine methyl ester. The S-farnesyl cysteine moiety is linked to residue Cys394. A propeptide spans 395–397 (removed in mature form); the sequence is QTS.

In terms of assembly, identified in a complex with HSPA1B and BAX. Interacts with RNF207.

The protein resides in the membrane. It is found in the cytoplasm. The protein localises to the microsome. It localises to the mitochondrion. Its subcellular location is the nucleus. The protein resides in the perinuclear region. Co-chaperone for HSPA8/Hsc70. Plays a role in protein transport into mitochondria via its role as co-chaperone. Stimulates ATP hydrolysis, but not the folding of unfolded proteins mediated by HSPA1A (in vitro). Promotes apoptosis in response to cellular stress mediated by exposure to anisomycin or UV. Functions as co-chaperone for HSPA1B and negatively regulates the translocation of BAX from the cytosol to mitochondria in response to cellular stress, thereby protecting cells against apoptosis. The protein is DnaJ homolog subfamily A member 1 (Dnaja1) of Mus musculus (Mouse).